A 480-amino-acid polypeptide reads, in one-letter code: Type II methyltransferase M.NspV (480 aa).

This sequence belongs to the methyltransferase superfamily.

In terms of biological role, a gamma subtype methylase that recognizes the double-stranded sequence 5'-TTCGAA-3', and methylates it on an unknown base to protect it against the NspV endonuclease. The chain is Type II methyltransferase M.NspV from Nostoc sp. (strain ATCC 29411 / PCC 7524).